A 459-amino-acid chain; its full sequence is Putrescine aminotransferase (459 aa).

Pyridoxal 5'-phosphate contacts are provided by residues 150-151 (GT) and Q274. At K300 the chain carries N6-(pyridoxal phosphate)lysine. T332 lines the pyridoxal 5'-phosphate pocket.

It belongs to the class-III pyridoxal-phosphate-dependent aminotransferase family. Putrescine aminotransferase subfamily. It depends on pyridoxal 5'-phosphate as a cofactor.

The catalysed reaction is an alkane-alpha,omega-diamine + 2-oxoglutarate = an omega-aminoaldehyde + L-glutamate. The enzyme catalyses putrescine + 2-oxoglutarate = 1-pyrroline + L-glutamate + H2O. It catalyses the reaction cadaverine + 2-oxoglutarate = 5-aminopentanal + L-glutamate. It participates in amine and polyamine degradation; putrescine degradation; 4-aminobutanal from putrescine (transaminase route): step 1/1. In terms of biological role, catalyzes the aminotransferase reaction from putrescine to 2-oxoglutarate, leading to glutamate and 4-aminobutanal, which spontaneously cyclizes to form 1-pyrroline. This is the first step in one of two pathways for putrescine degradation, where putrescine is converted into 4-aminobutanoate (gamma-aminobutyrate or GABA) via 4-aminobutanal. Also functions as a cadaverine transaminase in a a L-lysine degradation pathway to succinate that proceeds via cadaverine, glutarate and L-2-hydroxyglutarate. The protein is Putrescine aminotransferase of Escherichia coli O17:K52:H18 (strain UMN026 / ExPEC).